Here is a 447-residue protein sequence, read N- to C-terminus: Na(+)-translocating NADH-quinone reductase subunit A (447 aa).

It belongs to the NqrA family. As to quaternary structure, composed of six subunits; NqrA, NqrB, NqrC, NqrD, NqrE and NqrF.

It carries out the reaction a ubiquinone + n Na(+)(in) + NADH + H(+) = a ubiquinol + n Na(+)(out) + NAD(+). In terms of biological role, NQR complex catalyzes the reduction of ubiquinone-1 to ubiquinol by two successive reactions, coupled with the transport of Na(+) ions from the cytoplasm to the periplasm. NqrA to NqrE are probably involved in the second step, the conversion of ubisemiquinone to ubiquinol. The chain is Na(+)-translocating NADH-quinone reductase subunit A from Neisseria gonorrhoeae (strain ATCC 700825 / FA 1090).